The primary structure comprises 366 residues: Chorismate synthase (366 aa).

2 residues coordinate NADP(+): Arg48 and Arg54. Residues 125–127 (RSS), 238–239 (NA), Gly278, 293–297 (KPTSS), and Arg319 each bind FMN.

The protein belongs to the chorismate synthase family. In terms of assembly, homotetramer. It depends on FMNH2 as a cofactor.

The catalysed reaction is 5-O-(1-carboxyvinyl)-3-phosphoshikimate = chorismate + phosphate. It participates in metabolic intermediate biosynthesis; chorismate biosynthesis; chorismate from D-erythrose 4-phosphate and phosphoenolpyruvate: step 7/7. Its function is as follows. Catalyzes the anti-1,4-elimination of the C-3 phosphate and the C-6 proR hydrogen from 5-enolpyruvylshikimate-3-phosphate (EPSP) to yield chorismate, which is the branch point compound that serves as the starting substrate for the three terminal pathways of aromatic amino acid biosynthesis. This reaction introduces a second double bond into the aromatic ring system. The protein is Chorismate synthase of Neisseria meningitidis serogroup C / serotype 2a (strain ATCC 700532 / DSM 15464 / FAM18).